Consider the following 85-residue polypeptide: Cell division protein ZapA (85 aa).

The stretch at 60–85 forms a coiled coil; that stretch reads AVNVVHDYLKLKEELERLKGQIKEKD.

The protein belongs to the ZapA family. Type 2 subfamily. In terms of assembly, homodimer. Interacts with FtsZ.

Its subcellular location is the cytoplasm. Functionally, activator of cell division through the inhibition of FtsZ GTPase activity, therefore promoting FtsZ assembly into bundles of protofilaments necessary for the formation of the division Z ring. It is recruited early at mid-cell but it is not essential for cell division. This is Cell division protein ZapA from Bacillus licheniformis (strain ATCC 14580 / DSM 13 / JCM 2505 / CCUG 7422 / NBRC 12200 / NCIMB 9375 / NCTC 10341 / NRRL NRS-1264 / Gibson 46).